We begin with the raw amino-acid sequence, 339 residues long: Delta(9)-fatty-acid desaturase fat-6 (339 aa).

The next 4 membrane-spanning stretches (helical) occupy residues 52–72 (VALFAALHFAAAIGLYQLIFE), 77–97 (TVIFTFLLYVFGGFGITAGAH), 195–215 (YFPLVILCCFILPTIIPVYFW), and 219–241 (AFIAFYTAGTFRYCFTLHATWCI).

This sequence belongs to the fatty acid desaturase type 1 family. As to expression, expressed in the intestine in adult worms and in all four larval stages. Additional expression in the hypodermis in all life stages.

The protein resides in the membrane. It carries out the reaction octadecanoyl-CoA + 2 Fe(II)-[cytochrome b5] + O2 + 2 H(+) = (9Z)-octadecenoyl-CoA + 2 Fe(III)-[cytochrome b5] + 2 H2O. It catalyses the reaction hexadecanoyl-CoA + 2 Fe(II)-[cytochrome b5] + O2 + 2 H(+) = (9Z)-hexadecenoyl-CoA + 2 Fe(III)-[cytochrome b5] + 2 H2O. The catalysed reaction is heptadecanoyl-CoA + 2 Fe(II)-[cytochrome b5] + O2 + 2 H(+) = (9Z)-heptadecenoyl-CoA + 2 Fe(III)-[cytochrome b5] + 2 H2O. The enzyme catalyses (11E)-octadecenoyl-CoA + 2 Fe(II)-[cytochrome b5] + O2 + 2 H(+) = (9Z,11E)-octadecadienoyl-CoA + 2 Fe(III)-[cytochrome b5] + 2 H2O. The protein operates within lipid metabolism; monounsaturated fatty acid biosynthesis. Its pathway is lipid metabolism; fatty acid metabolism. Functionally, delta(9)-fatty acid desaturase that acts preferentially on stearoyl-CoA (octadecanoyl-CoA) producing the monounsaturated oleoyl-CoA ((9Z)-octadecenoyl-CoA), one of the most abundant monounsaturated fatty acid in Caenorhabditis elegans phospholipids and triacylglycerols. Also acts on palmitoyl-CoA (hexadecanoyl-CoA), heptadecanoyl-CoA and (11E)-octadecenoyl-CoA (trans-vaccenoyl-CoA), the monounsaturated fatty acids (MUFAs) produced are further used as substrates to synthesize polyunsaturated fatty acids (PUFAs) by several other desaturases and elongases. Unlike plants, Caenorhabditis elegans desaturases seem to use fatty acyl-CoAs as substrates. This chain is Delta(9)-fatty-acid desaturase fat-6 (fat-6), found in Caenorhabditis elegans.